A 140-amino-acid chain; its full sequence is Nucleoside diphosphate kinase (140 aa).

Positions 11, 59, 87, 93, 104, and 114 each coordinate ATP. Histidine 117 functions as the Pros-phosphohistidine intermediate in the catalytic mechanism.

Belongs to the NDK family. In terms of assembly, homotetramer. Mg(2+) is required as a cofactor.

It localises to the cytoplasm. It catalyses the reaction a 2'-deoxyribonucleoside 5'-diphosphate + ATP = a 2'-deoxyribonucleoside 5'-triphosphate + ADP. The catalysed reaction is a ribonucleoside 5'-diphosphate + ATP = a ribonucleoside 5'-triphosphate + ADP. In terms of biological role, major role in the synthesis of nucleoside triphosphates other than ATP. The ATP gamma phosphate is transferred to the NDP beta phosphate via a ping-pong mechanism, using a phosphorylated active-site intermediate. The chain is Nucleoside diphosphate kinase from Francisella philomiragia subsp. philomiragia (strain ATCC 25017 / CCUG 19701 / FSC 153 / O#319-036).